A 381-amino-acid chain; its full sequence is MGDRERNKKRLLELLRAPDTGNAHCADCGAADPDWASYKLGIFICLNCCGVHRNFPDISRVKSVRLDFWDDSIVEFMIHNGNLRVKAKFEARVPAFYYIPQANDCLVLKEQWIRAKYERREFMADGETISLPGNREGFLWKRGRDNSQFLRRKFVLLAREGLLKYFTKEQGKSPKAVISIKDLNATFQTEKIGHPHGLQITYRRDGHTRNLFVYHESGKEIVDWFNALRAARLQYLKMAFPELPESELVPFLTRNYLKQGFMEKTGPKQKEPFKKRWFALDCHERRLLYYKNPLDAFEQGQVFLGNKEQGYEAYEDLPKGIRGNRWKAGLTIVTPERRFVLTCPSEKEQQEWLESLRGVLSSPLTPLNRLTASTESGRSSR.

The 123-residue stretch at Lys-9–Leu-131 folds into the Arf-GAP domain. The C4-type zinc-finger motif lies at Cys-25–Cys-48. PH domains follow at residues Pro-132–Leu-233 and Asn-255–Ser-361.

As to expression, highly expressed in placenta, spleen, kidney, skeletal muscle and adrenal gland. Weakly expressed in thyroid, liver, heart, lung, small intestine, peripheral blood leukocytes. Not detected in spinal cord, brain, stomach, trachea, colon, lymph node and bone marrow.

It localises to the cytoplasm. Its subcellular location is the cell membrane. GTPase-activating protein for the ADP ribosylation factor family (Potential). Binds phosphatidylinositol 3,4,5-trisphosphate (PtdInsP3) and inositol 1,3,4,5-tetrakisphosphate (InsP4). Possesses a stoichiometry of two binding sites for InsP4 with identical affinity. The protein is Arf-GAP with dual PH domain-containing protein 2 (ADAP2) of Homo sapiens (Human).